We begin with the raw amino-acid sequence, 398 residues long: Phytoene synthase, chloroplastic (398 aa).

The protein belongs to the phytoene/squalene synthase family. Monomer.

The protein resides in the plastid. It is found in the chloroplast. The enzyme catalyses 2 (2E,6E,10E)-geranylgeranyl diphosphate = 15-cis-phytoene + 2 diphosphate. It functions in the pathway carotenoid biosynthesis; phytoene biosynthesis; all-trans-phytoene from geranylgeranyl diphosphate: step 1/1. In terms of biological role, catalyzes the reaction from prephytoene diphosphate to phytoene. The protein is Phytoene synthase, chloroplastic (PSY) of Daucus carota (Wild carrot).